The primary structure comprises 307 residues: Aspartate carbamoyltransferase catalytic subunit (307 aa).

Positions 56 and 57 each coordinate carbamoyl phosphate. Lys84 lines the L-aspartate pocket. Residues Arg106, His136, and Gln139 each contribute to the carbamoyl phosphate site. Residues Arg169 and Arg221 each coordinate L-aspartate. Ala262 and Pro263 together coordinate carbamoyl phosphate.

It belongs to the aspartate/ornithine carbamoyltransferase superfamily. ATCase family. In terms of assembly, heterododecamer (2C3:3R2) of six catalytic PyrB chains organized as two trimers (C3), and six regulatory PyrI chains organized as three dimers (R2).

The catalysed reaction is carbamoyl phosphate + L-aspartate = N-carbamoyl-L-aspartate + phosphate + H(+). It participates in pyrimidine metabolism; UMP biosynthesis via de novo pathway; (S)-dihydroorotate from bicarbonate: step 2/3. Functionally, catalyzes the condensation of carbamoyl phosphate and aspartate to form carbamoyl aspartate and inorganic phosphate, the committed step in the de novo pyrimidine nucleotide biosynthesis pathway. This Streptococcus pneumoniae (strain 70585) protein is Aspartate carbamoyltransferase catalytic subunit.